A 449-amino-acid chain; its full sequence is Bifunctional protein GlmU (449 aa).

Positions 1-225 (MLSVAILAAG…NGELQGINNR (225 aa)) are pyrophosphorylase. Residues 7 to 10 (LAAG), K21, Q73, and 78 to 79 (GT) each bind UDP-N-acetyl-alpha-D-glucosamine. D103 lines the Mg(2+) pocket. G140, E154, N169, and N223 together coordinate UDP-N-acetyl-alpha-D-glucosamine. N223 contacts Mg(2+). Positions 226-246 (IHLSECEECIQNSIKEKHMLN) are linker. The tract at residues 247–449 (GVTFINKASC…NIENWKKKKS (203 aa)) is N-acetyltransferase. UDP-N-acetyl-alpha-D-glucosamine-binding residues include R328 and K346. H358 (proton acceptor) is an active-site residue. Y361 and N372 together coordinate UDP-N-acetyl-alpha-D-glucosamine. Residues A375, A418, and R435 each coordinate acetyl-CoA.

This sequence in the N-terminal section; belongs to the N-acetylglucosamine-1-phosphate uridyltransferase family. The protein in the C-terminal section; belongs to the transferase hexapeptide repeat family. In terms of assembly, homotrimer. Mg(2+) is required as a cofactor.

The protein resides in the cytoplasm. The enzyme catalyses alpha-D-glucosamine 1-phosphate + acetyl-CoA = N-acetyl-alpha-D-glucosamine 1-phosphate + CoA + H(+). It carries out the reaction N-acetyl-alpha-D-glucosamine 1-phosphate + UTP + H(+) = UDP-N-acetyl-alpha-D-glucosamine + diphosphate. The protein operates within nucleotide-sugar biosynthesis; UDP-N-acetyl-alpha-D-glucosamine biosynthesis; N-acetyl-alpha-D-glucosamine 1-phosphate from alpha-D-glucosamine 6-phosphate (route II): step 2/2. Its pathway is nucleotide-sugar biosynthesis; UDP-N-acetyl-alpha-D-glucosamine biosynthesis; UDP-N-acetyl-alpha-D-glucosamine from N-acetyl-alpha-D-glucosamine 1-phosphate: step 1/1. It functions in the pathway bacterial outer membrane biogenesis; LPS lipid A biosynthesis. In terms of biological role, catalyzes the last two sequential reactions in the de novo biosynthetic pathway for UDP-N-acetylglucosamine (UDP-GlcNAc). The C-terminal domain catalyzes the transfer of acetyl group from acetyl coenzyme A to glucosamine-1-phosphate (GlcN-1-P) to produce N-acetylglucosamine-1-phosphate (GlcNAc-1-P), which is converted into UDP-GlcNAc by the transfer of uridine 5-monophosphate (from uridine 5-triphosphate), a reaction catalyzed by the N-terminal domain. The protein is Bifunctional protein GlmU of Prochlorococcus marinus (strain AS9601).